A 127-amino-acid chain; its full sequence is UPF0102 protein Mmwyl1_2395 (127 aa).

Belongs to the UPF0102 family.

The protein is UPF0102 protein Mmwyl1_2395 of Marinomonas sp. (strain MWYL1).